The primary structure comprises 304 residues: Porphobilinogen deaminase (304 aa).

S-(dipyrrolylmethanemethyl)cysteine is present on cysteine 240.

Belongs to the HMBS family. As to quaternary structure, monomer. Requires dipyrromethane as cofactor.

The catalysed reaction is 4 porphobilinogen + H2O = hydroxymethylbilane + 4 NH4(+). Its pathway is porphyrin-containing compound metabolism; protoporphyrin-IX biosynthesis; coproporphyrinogen-III from 5-aminolevulinate: step 2/4. Its function is as follows. Tetrapolymerization of the monopyrrole PBG into the hydroxymethylbilane pre-uroporphyrinogen in several discrete steps. The protein is Porphobilinogen deaminase of Xanthomonas campestris pv. campestris (strain B100).